We begin with the raw amino-acid sequence, 546 residues long: High-affinity glucose transporter ght5 (546 aa).

The Cytoplasmic segment spans residues 1–9 (MGKNLTIVM). A helical membrane pass occupies residues 10 to 30 (LVFVSMAGWMFGADTGSIGGI). Residues 31–58 (TNMRDFQSRFADRYNPVTDSYSYSSARQ) lie on the Extracellular side of the membrane. The chain crosses the membrane as a helical span at residues 59-79 (GLITGMVNVGSFFGCFLSSPL). Topologically, residues 80–87 (MDRIGKRT) are cytoplasmic. The helical transmembrane segment at 88-108 (SIMFWTIVYLIGIILQVTAVP) threads the bilayer. At 109 to 112 (SWVQ) the chain is on the extracellular side. A helical membrane pass occupies residues 113–133 (IMVAKIWTGLSIGALSVLAPG). The Cytoplasmic segment spans residues 134-144 (FQSEVAPADLR). Residues 145-165 (GTIVTTYQLAVTGGIFIAACI) form a helical membrane-spanning segment. Topologically, residues 166-179 (NMGTHKLHKTAQWR) are extracellular. The helical transmembrane segment at 180-200 (VSMGINLLWGIITFIGISFLP) threads the bilayer. The Cytoplasmic segment spans residues 201-266 (ESPRYLISVG…IFGPDIRYRT (66 aa)). The helical transmembrane segment at 267 to 285 (FLGLGVMSLQQLTGDNYYF) threads the bilayer. At 286–301 (YYGFEVFEGTGMNSPY) the chain is on the extracellular side. A helical membrane pass occupies residues 302-322 (LSALILDAVNFGCTFGGLFVL). Residues 323–328 (EFFGRR) are Cytoplasmic-facing. A helical membrane pass occupies residues 329–349 (MPLIIGALWQSITFFIYAAVG). Topologically, residues 350 to 363 (NRALTRKNGTSNHR) are extracellular. Asn357 is a glycosylation site (N-linked (GlcNAc...) asparagine). A helical membrane pass occupies residues 364–384 (AGAVMIVFSCLFIFSFAQTWG). Residues 385 to 404 (PAAYVIVGESYPIRYRSKCA) are Cytoplasmic-facing. Residues 405-425 (AVATTGNWLWGFLISFFTPFI) form a helical membrane-spanning segment. Residues 426–432 (TNSIGFK) lie on the Extracellular side of the membrane. The chain crosses the membrane as a helical span at residues 433–453 (YGYIFAACNLCAACIIFLFAH). Residues 454–546 (ETKGLTLEEI…SYHDQEEQFA (93 aa)) are Cytoplasmic-facing. Positions 486–546 (KQQEEVREKS…SYHDQEEQFA (61 aa)) are disordered. Over residues 487–496 (QQEEVREKSR) the composition is skewed to basic and acidic residues. Over residues 509–519 (VDGEEGIEDSS) the composition is skewed to acidic residues. A compositionally biased stretch (low complexity) spans 520-529 (NDISSTTSSD). Residues Ser528 and Ser537 each carry the phosphoserine modification. Residues 530 to 546 (GRAKPESSYHDQEEQFA) show a composition bias toward basic and acidic residues.

This sequence belongs to the major facilitator superfamily. Sugar transporter (TC 2.A.1.1) family.

Its subcellular location is the membrane. Its function is as follows. High-affinity glucose transporter. The protein is High-affinity glucose transporter ght5 (ght5) of Schizosaccharomyces pombe (strain 972 / ATCC 24843) (Fission yeast).